The sequence spans 521 residues: MTEFVPLTWHDTLYLAPELILAAMFLILIVTDLILPGRTNRAIIGWLSLAGLLLSLAAVIWRMIDMNPSGVSAAEAAEAGKAISLLGASYRVDDYGNLLKIIFLIGTSLVVLLGLGSTQKDDAVTDKAEFYYLLLPAAAGAMIMASSGNLVTLYIGLELLSITTYVLVGLRKRSSLSAEAAFKYVVTGGIASAFVLFGMSYLYGVTGSVSLADFPTALPQAFTDYKALVYVGFFFLIAGFGIKIAAAPFHIWAADVYQGAPTPVSAFLAVIAKGAALAAVFRFLYSSAFFLTGGPGKQAGDDVFFALLVIAAAAMIAGTVSALRQKQVKRLLALSGVANAGYLLVPIAISVTIIHSNNFSEFVFYLVAYLLMNVGAFAVVTVIARAAGHEELKGFSGLYYRAPWTAAAMLIFILSFSGLPVTAGFFGKLFILLGAASVKAYWLVAIMVVSTVISYYFYFGIIRQMFMRSNGEEEDRIHVPAVTGTVIWICAAATVALGVLPGPLMKWIDAVFTIQADLFVR.

14 helical membrane-spanning segments follow: residues 15-35 (LAPE…DLIL), 43-63 (IIGW…IWRM), 98-118 (LLKI…LGST), 128-148 (AEFY…ASSG), 150-170 (LVTL…LVGL), 185-205 (VVTG…LYGV), 227-247 (ALVY…IAAA), 261-281 (PTPV…AAVF), 303-323 (VFFA…VSAL), 331-351 (LLAL…AISV), 363-383 (VFYL…VTVI), 406-426 (AAAM…AGFF), 442-462 (WLVA…FGII), and 485-505 (TVIW…GPLM).

It belongs to the complex I subunit 2 family. In terms of assembly, NDH-1 is composed of 14 different subunits. Subunits NuoA, H, J, K, L, M, N constitute the membrane sector of the complex.

It is found in the cell membrane. The enzyme catalyses a quinone + NADH + 5 H(+)(in) = a quinol + NAD(+) + 4 H(+)(out). NDH-1 shuttles electrons from NADH, via FMN and iron-sulfur (Fe-S) centers, to quinones in the respiratory chain. The immediate electron acceptor for the enzyme in this species is believed to be a menaquinone. Couples the redox reaction to proton translocation (for every two electrons transferred, four hydrogen ions are translocated across the cytoplasmic membrane), and thus conserves the redox energy in a proton gradient. The polypeptide is NADH-quinone oxidoreductase subunit N (Paenibacillus sp. (strain JDR-2)).